The following is a 758-amino-acid chain: Aspartyl/asparaginyl beta-hydroxylase (758 aa).

Residues 1 to 46 (MAQRKNAKSSGNSSSSGSGSGSTSAGSSSPGARRETKHGGHKNGRK) are disordered. Over 1–53 (MAQRKNAKSSGNSSSSGSGSGSTSAGSSSPGARRETKHGGHKNGRKGGLSGTS) the chain is Cytoplasmic. Over residues 9 to 31 (SSGNSSSSGSGSGSTSAGSSSPG) the composition is skewed to low complexity. At Ser14 the chain carries Phosphoserine. The helical; Signal-anchor for type II membrane protein transmembrane segment at 54–74 (FFTWFMVIALLGVWTSVAVVW) threads the bilayer. N-linked (GlcNAc...) asparagine glycosylation is present at Leu64. The Lumenal portion of the chain corresponds to 75-758 (FDLVDYEEVL…PQQRRSLPAI (684 aa)). The Ca(2+) site is built by Asp91, Asp93, Asp95, Asp97, and Asp102. Disordered regions lie at residues 111–140 (ERST…EAEP) and 304–324 (EEQQ…EQKA). Over residues 313 to 324 (TNRKTDDPEQKA) the composition is skewed to basic and acidic residues. Residues 341-374 (IKAELDAAEKLRKRGKIEEAVNAFKELVRKYPQS) form a TPR 1 repeat. N-linked (GlcNAc...) asparagine glycosylation is present at Asn452. TPR repeat units follow at residues 454 to 487 (TSLK…TPND), 489 to 521 (FAKV…GDPG), and 525 to 557 (GRFY…GHFA). Trp625 contributes to the 2-oxoglutarate binding site. Residues Cys641 and Cys648 are joined by a disulfide bond. Position 668 (Ser668) interacts with 2-oxoglutarate. His679 lines the Fe cation pocket. Position 688 to 690 (688 to 690 (RMH)) interacts with 2-oxoglutarate. N-linked (GlcNAc...) asparagine glycosylation is present at Asn706. His725 is a Fe cation binding site. 2-oxoglutarate is bound at residue Arg735.

This sequence belongs to the aspartyl/asparaginyl beta-hydroxylase family. Monomer. Isoform 8 interacts with ORAI1 and STIM1. Isoform 4 interacts with CASQ2. It depends on Fe cation as a cofactor. Isoform 1 is detected in all tissues tested. Isoform 8 is mainly expressed in pancreas, heart, brain, kidney and liver. Isoform 8 is expressed in kidney (at protein level).

Its subcellular location is the endoplasmic reticulum membrane. The protein resides in the sarcoplasmic reticulum membrane. It catalyses the reaction L-aspartyl-[protein] + 2-oxoglutarate + O2 = 3-hydroxy-L-aspartyl-[protein] + succinate + CO2. Its function is as follows. Specifically hydroxylates an Asp or Asn residue in certain epidermal growth factor-like (EGF) domains of a number of proteins. Membrane-bound Ca(2+)-sensing protein, which is a structural component of the ER-plasma membrane junctions. Isoform 8 regulates the activity of Ca(+2) released-activated Ca(+2) (CRAC) channels in T-cells. This Homo sapiens (Human) protein is Aspartyl/asparaginyl beta-hydroxylase (ASPH).